A 2314-amino-acid polypeptide reads, in one-letter code: A-kinase anchor protein 6 (2314 aa).

A compositionally biased stretch (polar residues) spans 1 to 12 (MLTMSVTLSPLR). Disordered regions lie at residues 1 to 25 (MLTMSVTLSPLRSQGPDPMATDASP), 285 to 432 (PSSC…DPPD), 505 to 613 (SLCR…PCHA), and 736 to 755 (TDEKSERPSSSEKNESHSAT). Over residues 301-311 (SDDHKGEHGED) the composition is skewed to basic and acidic residues. The span at 319–330 (QLDSTVGMSSLD) shows a compositional bias: polar residues. The span at 398 to 420 (ETQKNERKGSDRKGQVVDLKPEL) shows a compositional bias: basic and acidic residues. The span at 569 to 592 (SKASSSPPCSHSSESSLGSDSIKS) shows a compositional bias: low complexity. Residues 736–753 (TDEKSERPSSSEKNESHS) show a composition bias toward basic and acidic residues. Spectrin repeat units lie at residues 768 to 847 (QHQE…QLLE) and 1033 to 1148 (ILEK…LLDD). S1072 carries the phosphoserine modification. Positions 1349–1401 (CHSGDLSQNSGSESGIVSEGDNEMPTNSDMSLFSMVDGSPSNPETEHPDPQMG) are disordered. A compositionally biased stretch (polar residues) spans 1353 to 1363 (DLSQNSGSESG). 2 positions are modified to phosphoserine: S1568 and S1593. Composition is skewed to basic and acidic residues over residues 1816 to 1831 (RSGVTDEIKVNKDGGG) and 1874 to 1891 (GENKKSTYDVSKDPHVAD). 3 disordered regions span residues 1816 to 1838 (RSGVTDEIKVNKDGGGNEKANPS), 1854 to 1926 (LSEN…KTIS), and 1940 to 2012 (SEDS…SGAR). Residues 1917–1926 (NLASNVKTIS) show a composition bias toward polar residues. Over residues 1944–1958 (SVARKEFCPPNDRHP) the composition is skewed to basic and acidic residues. Residues 2062 to 2075 (IIDMASTALKSKSQ) form a PKA-RII subunit binding domain region. A disordered region spans residues 2166-2286 (EEAGLPGALP…NAKQPKGKVA (121 aa)). Residues 2215–2226 (GADDAKEGDDVS) are compositionally biased toward basic and acidic residues. The segment covering 2227-2243 (HTSQGCAESTEPTTPSG) has biased composition (polar residues).

Interacts with RII subunit of PKA, phosphatase 2B (calcineurin) and AKAP79. Interacts with SYNPO2.

It is found in the sarcoplasmic reticulum. Its subcellular location is the nucleus membrane. Functionally, binds to type II regulatory subunits of protein kinase A and anchors/targets them to the nuclear membrane or sarcoplasmic reticulum. May act as an adapter for assembling multiprotein complexes. The chain is A-kinase anchor protein 6 (Akap6) from Rattus norvegicus (Rat).